We begin with the raw amino-acid sequence, 504 residues long: Putative pentatricopeptide repeat-containing protein At3g28640 (504 aa).

PPR repeat units lie at residues 77 to 107, 115 to 149, 151 to 181, 182 to 216, 217 to 251, 253 to 287, 288 to 319, 320 to 350, and 356 to 390; these read NSFV…MVKE, SYLT…GVFL, DSHV…IPQP, DVVK…GLEP, DEFS…SWIE, DVFV…NVFS, WAAL…GIKP, DSVV…MEAR, and KHEH…PLAS. The type E motif stretch occupies residues 391–470; sequence VWGALLNGCR…TPGWSVLEVD (80 aa). Positions 471–501 are type E(+) motif; the sequence is GNVTKFVSGDVSHPNLLQIHTVIHLLSVDAL.

This sequence belongs to the PPR family. PCMP-E subfamily.

This Arabidopsis thaliana (Mouse-ear cress) protein is Putative pentatricopeptide repeat-containing protein At3g28640 (PCMP-E79).